We begin with the raw amino-acid sequence, 122 residues long: Large ribosomal subunit protein uL14c (122 aa).

This sequence belongs to the universal ribosomal protein uL14 family. In terms of assembly, part of the 50S ribosomal subunit.

It localises to the plastid. It is found in the chloroplast. Its function is as follows. Binds to 23S rRNA. In Jasminum nudiflorum (Winter jasmine), this protein is Large ribosomal subunit protein uL14c.